We begin with the raw amino-acid sequence, 365 residues long: Chorismate synthase (365 aa).

Arg46 contacts NADP(+). Residues 124–126 (RAS), Gly284, 299–303 (KPTPS), and Arg326 contribute to the FMN site.

This sequence belongs to the chorismate synthase family. The cofactor is FMNH2.

The catalysed reaction is 5-O-(1-carboxyvinyl)-3-phosphoshikimate = chorismate + phosphate. Its pathway is metabolic intermediate biosynthesis; chorismate biosynthesis; chorismate from D-erythrose 4-phosphate and phosphoenolpyruvate: step 7/7. Functionally, catalyzes the anti-1,4-elimination of the C-3 phosphate and the C-6 proR hydrogen from 5-enolpyruvylshikimate-3-phosphate (EPSP) to yield chorismate, which is the branch point compound that serves as the starting substrate for the three terminal pathways of aromatic amino acid biosynthesis. This reaction introduces a second double bond into the aromatic ring system. The sequence is that of Chorismate synthase from Pyrobaculum islandicum (strain DSM 4184 / JCM 9189 / GEO3).